A 441-amino-acid chain; its full sequence is MATSKPASIAMISLGCPKALVDSERILTQLRTEGYQVTPSYDDADVVVVNTCGFIDSAKAESLEAIGEAIAENGKVIVTGCMGVEESVIREIHPSVLAVTGPQQYEQVVLEVHRAAPPKADHNPYVDLVPPQGVKLTPRHYAYLKISEGCNHRCSFCIIPSMRGDLVSRPVGDVLSEAERLVKAGVKELLVISQDTSAYGVDLKYRSGFWNGRPIKTRMTELCAALSELGVWTRLHYVYPYPHVDEVIPLMAQGKVLPYLDIPFQHASPRILKAMKRPAFEDKTLARIKRWREECPDLTLRSTFIVGFPGETEADFQYLLDWMSEAQLDRVGCFQYSPVNGAPANELDGAVPDEVKQERWDRFMAHQQAISAARLQTRVGREIDVLIDEVNADGAVGRSSADAPEIDGCVYVGNAATLRPGDMARVRITAADEYDLHGDAV.

Positions 7 to 117 (ASIAMISLGC…VVLEVHRAAP (111 aa)) constitute an MTTase N-terminal domain. Residues cysteine 16, cysteine 52, cysteine 81, cysteine 150, cysteine 154, and cysteine 157 each contribute to the [4Fe-4S] cluster site. The Radical SAM core domain maps to 136 to 373 (LTPRHYAYLK…MAHQQAISAA (238 aa)). The TRAM domain maps to 376–441 (QTRVGREIDV…DEYDLHGDAV (66 aa)).

The protein belongs to the methylthiotransferase family. RimO subfamily. The cofactor is [4Fe-4S] cluster.

It localises to the cytoplasm. The catalysed reaction is L-aspartate(89)-[ribosomal protein uS12]-hydrogen + (sulfur carrier)-SH + AH2 + 2 S-adenosyl-L-methionine = 3-methylsulfanyl-L-aspartate(89)-[ribosomal protein uS12]-hydrogen + (sulfur carrier)-H + 5'-deoxyadenosine + L-methionine + A + S-adenosyl-L-homocysteine + 2 H(+). In terms of biological role, catalyzes the methylthiolation of an aspartic acid residue of ribosomal protein uS12. The protein is Ribosomal protein uS12 methylthiotransferase RimO of Bordetella petrii (strain ATCC BAA-461 / DSM 12804 / CCUG 43448).